Consider the following 159-residue polypeptide: NADH-quinone oxidoreductase subunit I (159 aa).

4Fe-4S ferredoxin-type domains follow at residues 51–80 (RRYE…IEAD) and 90–119 (TRYD…EGPN). The [4Fe-4S] cluster site is built by C60, C63, C66, C70, C99, C102, C105, and C109.

The protein belongs to the complex I 23 kDa subunit family. As to quaternary structure, NDH-1 is composed of 14 different subunits. Subunits NuoA, H, J, K, L, M, N constitute the membrane sector of the complex. [4Fe-4S] cluster serves as cofactor.

It localises to the cell inner membrane. The catalysed reaction is a quinone + NADH + 5 H(+)(in) = a quinol + NAD(+) + 4 H(+)(out). Functionally, NDH-1 shuttles electrons from NADH, via FMN and iron-sulfur (Fe-S) centers, to quinones in the respiratory chain. The immediate electron acceptor for the enzyme in this species is believed to be ubiquinone. Couples the redox reaction to proton translocation (for every two electrons transferred, four hydrogen ions are translocated across the cytoplasmic membrane), and thus conserves the redox energy in a proton gradient. The polypeptide is NADH-quinone oxidoreductase subunit I (Rickettsia bellii (strain OSU 85-389)).